Here is a 59-residue protein sequence, read N- to C-terminus: MNFNKLFVIVLLAALAFFGQAEAGGLKKFGKKLEGVGKRVFKASEKALPVVTGFKALGK.

Residues 1 to 23 form the signal peptide; the sequence is MNFNKLFVIVLLAALAFFGQAEA. At Leu57 the chain carries Leucine amide.

The protein belongs to the cecropin family.

It is found in the secreted. Cecropins have lytic and antibacterial activity against several Gram-positive and Gram-negative bacteria. The polypeptide is Cecropin-A (CECA) (Culex pipiens pipiens (Northern house mosquito)).